The following is a 95-amino-acid chain: ATP-dependent Clp protease adapter protein ClpS (95 aa).

Belongs to the ClpS family. As to quaternary structure, binds to the N-terminal domain of the chaperone ClpA.

Functionally, involved in the modulation of the specificity of the ClpAP-mediated ATP-dependent protein degradation. The sequence is that of ATP-dependent Clp protease adapter protein ClpS from Synechococcus elongatus (strain ATCC 33912 / PCC 7942 / FACHB-805) (Anacystis nidulans R2).